A 444-amino-acid chain; its full sequence is Methylenetetrahydrofolate--tRNA-(uracil-5-)-methyltransferase TrmFO (444 aa).

9 to 14 (GAGMAG) lines the FAD pocket.

This sequence belongs to the MnmG family. TrmFO subfamily. FAD is required as a cofactor.

The protein resides in the cytoplasm. It catalyses the reaction uridine(54) in tRNA + (6R)-5,10-methylene-5,6,7,8-tetrahydrofolate + NADH + H(+) = 5-methyluridine(54) in tRNA + (6S)-5,6,7,8-tetrahydrofolate + NAD(+). The enzyme catalyses uridine(54) in tRNA + (6R)-5,10-methylene-5,6,7,8-tetrahydrofolate + NADPH + H(+) = 5-methyluridine(54) in tRNA + (6S)-5,6,7,8-tetrahydrofolate + NADP(+). Its function is as follows. Catalyzes the folate-dependent formation of 5-methyl-uridine at position 54 (M-5-U54) in all tRNAs. The polypeptide is Methylenetetrahydrofolate--tRNA-(uracil-5-)-methyltransferase TrmFO (Cereibacter sphaeroides (strain ATCC 17029 / ATH 2.4.9) (Rhodobacter sphaeroides)).